Here is a 311-residue protein sequence, read N- to C-terminus: Peptide methionine sulfoxide reductase MsrA/MsrB (311 aa).

The peptide methionine sulfoxide reductase A stretch occupies residues 1-155 (MAEIYLAGGC…PGGYCHINVN (155 aa)). Cys10 is a catalytic residue. Positions 172–295 (DAELKEQLTQ…NSAALRFIPK (124 aa)) constitute a MsrB domain. Residue Cys284 is the Nucleophile of the active site.

In the N-terminal section; belongs to the MsrA Met sulfoxide reductase family. It in the C-terminal section; belongs to the MsrB Met sulfoxide reductase family.

The enzyme catalyses L-methionyl-[protein] + [thioredoxin]-disulfide + H2O = L-methionyl-(S)-S-oxide-[protein] + [thioredoxin]-dithiol. The catalysed reaction is [thioredoxin]-disulfide + L-methionine + H2O = L-methionine (S)-S-oxide + [thioredoxin]-dithiol. It carries out the reaction L-methionyl-[protein] + [thioredoxin]-disulfide + H2O = L-methionyl-(R)-S-oxide-[protein] + [thioredoxin]-dithiol. Has an important function as a repair enzyme for proteins that have been inactivated by oxidation. Catalyzes the reversible oxidation-reduction of methionine sulfoxide in proteins to methionine. Involved in protection against oxidative stress when the bacterium enters the host bloodstream and required for maximal growth under aerobic and anaerobic conditions. The protein is Peptide methionine sulfoxide reductase MsrA/MsrB (msrAB) of Streptococcus gordonii (strain Challis / ATCC 35105 / BCRC 15272 / CH1 / DL1 / V288).